The sequence spans 230 residues: UPF0758 protein Daud_1467 (230 aa).

In terms of domain architecture, MPN spans 108–230; the sequence is TVRTPEEAAG…FTSLKLEGLF (123 aa). 3 residues coordinate Zn(2+): His-179, His-181, and Asp-192. The short motif at 179–192 is the JAMM motif element; sequence HNHPSGDPAPSPQD.

Belongs to the UPF0758 family.

The polypeptide is UPF0758 protein Daud_1467 (Desulforudis audaxviator (strain MP104C)).